Consider the following 209-residue polypeptide: MERKVFSKDGKEIGTINLDDRVFNIEISHGSIYNAIKNELSNLRVGTSSTKTRSEVRGSSKKPWKQKGTGRARVGTKRNPVWIGGGIALGPKPRDYSYRLPKKVKKLAFKSVLSLRAADENSFKVIENFSVESGKTKDLALIIKNFASFNGKVVILLGNDDQMIKRAGKNIRDLKILSFDKLRVVDLFYAKNLIALESAVNKLNEFYIK.

A disordered region spans residues 47–72; it reads TSSTKTRSEVRGSSKKPWKQKGTGRA. Residues 59–72 show a composition bias toward basic residues; sequence SSKKPWKQKGTGRA.

The protein belongs to the universal ribosomal protein uL4 family. In terms of assembly, part of the 50S ribosomal subunit.

Its function is as follows. One of the primary rRNA binding proteins, this protein initially binds near the 5'-end of the 23S rRNA. It is important during the early stages of 50S assembly. It makes multiple contacts with different domains of the 23S rRNA in the assembled 50S subunit and ribosome. In terms of biological role, forms part of the polypeptide exit tunnel. The polypeptide is Large ribosomal subunit protein uL4 (Borreliella burgdorferi (strain ZS7) (Borrelia burgdorferi)).